Reading from the N-terminus, the 100-residue chain is NADH-quinone oxidoreductase subunit K (100 aa).

3 helical membrane passes run Leu4–Ile24, Ile29–Phe49, and Ile60–Val80.

It belongs to the complex I subunit 4L family. In terms of assembly, NDH-1 is composed of 14 different subunits. Subunits NuoA, H, J, K, L, M, N constitute the membrane sector of the complex.

It is found in the cell inner membrane. The enzyme catalyses a quinone + NADH + 5 H(+)(in) = a quinol + NAD(+) + 4 H(+)(out). Its function is as follows. NDH-1 shuttles electrons from NADH, via FMN and iron-sulfur (Fe-S) centers, to quinones in the respiratory chain. The immediate electron acceptor for the enzyme in this species is believed to be ubiquinone. Couples the redox reaction to proton translocation (for every two electrons transferred, four hydrogen ions are translocated across the cytoplasmic membrane), and thus conserves the redox energy in a proton gradient. The polypeptide is NADH-quinone oxidoreductase subunit K (Thermodesulfovibrio yellowstonii (strain ATCC 51303 / DSM 11347 / YP87)).